The following is a 185-amino-acid chain: MINEIRKDTEVRMEKCLEVFQNHISKIRTGRASPSILDGIQVEYYGTATPLRQLANIVVEDSRTLALTVFDRSLSAAVEKAIMTSDLGLNPSSAGTVIRVPLPALTEERRKDLIKVVRAEAEQGRVSIRNVRRDANEKVKALLKDKEISEDEDRRSQDDIQKLTDAFIKKVDAALAAKETELMDF.

The protein belongs to the RRF family.

It localises to the cytoplasm. Its function is as follows. Responsible for the release of ribosomes from messenger RNA at the termination of protein biosynthesis. May increase the efficiency of translation by recycling ribosomes from one round of translation to another. This chain is Ribosome-recycling factor, found in Yersinia enterocolitica serotype O:8 / biotype 1B (strain NCTC 13174 / 8081).